We begin with the raw amino-acid sequence, 176 residues long: Disulfide bond formation protein B (176 aa).

Topologically, residues 1-14 are cytoplasmic; it reads MLRFLNRCSRGRGA. The helical transmembrane segment at 15 to 31 threads the bilayer; the sequence is WLLLAFTALALELTALY. The Periplasmic portion of the chain corresponds to 32–49; sequence FQHVMLLKPCVLCIYQRS. An intrachain disulfide couples Cys-41 to Cys-44. The chain crosses the membrane as a helical span at residues 50 to 65; it reads ALWGVFAAGIVGAIAP. Over 66-71 the chain is Cytoplasmic; that stretch reads SSLLRY. The chain crosses the membrane as a helical span at residues 72–89; it reads PAIALWIYSSYEGIRLAW. Residues 90-144 lie on the Periplasmic side of the membrane; the sequence is KHTDILLNPSPFTTCDFFVSFPSWLPLDKWLPAIFNATGDCSERQWSFLSMEMPQ. Cys-104 and Cys-130 are joined by a disulfide. The helical transmembrane segment at 145 to 163 threads the bilayer; that stretch reads WLLGIFAAYLLIAVLVLIA. The Cytoplasmic portion of the chain corresponds to 164–176; that stretch reads QPFRSKRRDLFSR.

This sequence belongs to the DsbB family.

Its subcellular location is the cell inner membrane. In terms of biological role, required for disulfide bond formation in some periplasmic proteins. Acts by oxidizing the DsbA protein. This chain is Disulfide bond formation protein B, found in Pectobacterium atrosepticum (strain SCRI 1043 / ATCC BAA-672) (Erwinia carotovora subsp. atroseptica).